The chain runs to 523 residues: 2-isopropylmalate synthase (523 aa).

The Pyruvate carboxyltransferase domain maps to 5-267; the sequence is VIIFDTTLRD…HTNINHHEIW (263 aa). Positions 14, 202, 204, and 238 each coordinate Mn(2+). Positions 392-523 are regulatory domain; that stretch reads RLDYFSVQSG…QNKENNKETV (132 aa).

It belongs to the alpha-IPM synthase/homocitrate synthase family. LeuA type 1 subfamily. In terms of assembly, homodimer. Requires Mn(2+) as cofactor.

The protein resides in the cytoplasm. It carries out the reaction 3-methyl-2-oxobutanoate + acetyl-CoA + H2O = (2S)-2-isopropylmalate + CoA + H(+). Its pathway is amino-acid biosynthesis; L-leucine biosynthesis; L-leucine from 3-methyl-2-oxobutanoate: step 1/4. Catalyzes the condensation of the acetyl group of acetyl-CoA with 3-methyl-2-oxobutanoate (2-ketoisovalerate) to form 3-carboxy-3-hydroxy-4-methylpentanoate (2-isopropylmalate). The sequence is that of 2-isopropylmalate synthase from Klebsiella pneumoniae (strain 342).